Consider the following 133-residue polypeptide: Transcription antitermination protein NusB (133 aa).

Belongs to the NusB family.

Involved in transcription antitermination. Required for transcription of ribosomal RNA (rRNA) genes. Binds specifically to the boxA antiterminator sequence of the ribosomal RNA (rrn) operons. This chain is Transcription antitermination protein NusB, found in Shewanella denitrificans (strain OS217 / ATCC BAA-1090 / DSM 15013).